The sequence spans 167 residues: Phosphopantetheine adenylyltransferase (167 aa).

Serine 9 is a binding site for substrate. ATP contacts are provided by residues 9–10 (SF) and histidine 17. Substrate is bound by residues lysine 41, valine 78, and arginine 92. Residues 93–95 (GLR), glutamate 103, and 128–134 (SRPITAT) each bind ATP.

This sequence belongs to the bacterial CoaD family. Homohexamer. Mg(2+) is required as a cofactor.

The protein resides in the cytoplasm. It carries out the reaction (R)-4'-phosphopantetheine + ATP + H(+) = 3'-dephospho-CoA + diphosphate. It functions in the pathway cofactor biosynthesis; coenzyme A biosynthesis; CoA from (R)-pantothenate: step 4/5. Its function is as follows. Reversibly transfers an adenylyl group from ATP to 4'-phosphopantetheine, yielding dephospho-CoA (dPCoA) and pyrophosphate. This chain is Phosphopantetheine adenylyltransferase, found in Rhizobium rhizogenes (strain K84 / ATCC BAA-868) (Agrobacterium radiobacter).